A 341-amino-acid chain; its full sequence is MEREKEQFRKLFIGGLSFETTEESLRNYYEQWGKLTDCVVMRDPASKRSRGFGFVTFSSMAEVDAAMAARPHSIDGRVVEPKRAVAREESGKPGAHVTVKKLFVGGIKEDTEEHHLRDYFEEYGKIDTIEIITDRQSGKKRGFGFVTFDDHDPVDKIVLQKYHTINGHNAEVRKALSRQEMQEVQSSRSGRGGNFGFGDSRGGGGNFGPGPGSNFRGGSDGYGSGRGFGDGYNGYGGGPGGGNFGGSPGYGGGRGGYGGGGPGYGNQGGGYGGGYDNYGGGNYGSGNYNDFGNYNQQPSNYGPMKSGNFGGSRNMGGPYGGGNYGPGGSGGSGGYGGRSRY.

RRM domains lie at 9-92 and 100-179; these read RKLF…ESGK and KKLF…LSRQ. K10 participates in a covalent cross-link: Glycyl lysine isopeptide (Lys-Gly) (interchain with G-Cter in SUMO2). Position 17 is a phosphoserine (S17). R26 bears the Omega-N-methylarginine mark. S73 carries the phosphoserine modification. At K92 the chain carries N6,N6-dimethyllysine; alternate. K92 is covalently cross-linked (Glycyl lysine isopeptide (Lys-Gly) (interchain with G-Cter in SUMO2); alternate). Residues K100, K108, and K125 each participate in a glycyl lysine isopeptide (Lys-Gly) (interchain with G-Cter in SUMO2) cross-link. T128 is subject to Phosphothreonine. Residue S137 is modified to Phosphoserine. A Glycyl lysine isopeptide (Lys-Gly) (interchain with G-Cter in SUMO2) cross-link involves residue K140. Position 147 is a phosphothreonine (T147). Residues K156 and K161 each participate in a glycyl lysine isopeptide (Lys-Gly) (interchain with G-Cter in SUMO2); alternate cross-link. K156 and K161 each carry N6-acetyllysine; alternate. T164 is modified (phosphothreonine). K174 is covalently cross-linked (Glycyl lysine isopeptide (Lys-Gly) (interchain with G-Cter in SUMO2)). 2 positions are modified to phosphoserine: S177 and S189. The segment at 181-341 is disordered; the sequence is MQEVQSSRSG…SGGYGGRSRY (161 aa). The span at 190-211 shows a compositional bias: gly residues; the sequence is GRGGNFGFGDSRGGGGNFGPGP. Asymmetric dimethylarginine; alternate is present on R191. R191 carries the post-translational modification Dimethylated arginine; alternate. The residue at position 191 (R191) is an Omega-N-methylarginine; alternate. Position 200 is a phosphoserine (S200). R201 carries the asymmetric dimethylarginine; alternate modification. At R201 the chain carries Dimethylated arginine; alternate. R201 carries the omega-N-methylarginine; alternate modification. Position 213 is a phosphoserine (S213). R216 carries the post-translational modification Omega-N-methylarginine. S219 and S224 each carry phosphoserine. R226 carries the omega-N-methylarginine modification. A Phosphoserine modification is found at S247. R254 bears the Asymmetric dimethylarginine; alternate mark. R254 bears the Omega-N-methylarginine; alternate mark. The tract at residues 296–335 is nuclear targeting sequence; that stretch reads QQPSNYGPMKSGNFGGSRNMGGPYGGGNYGPGGSGGSGGY. Gly residues predominate over residues 308-341; the sequence is NFGGSRNMGGPYGGGNYGPGGSGGSGGYGGRSRY. Position 312 is a phosphoserine (S312). An Omega-N-methylarginine modification is found at R313. A Phosphotyrosine modification is found at Y319. Phosphoserine is present on residues S329 and S332. Y335 carries the post-translational modification Phosphotyrosine. R338 is subject to Omega-N-methylarginine.

In terms of assembly, identified in the spliceosome C complex. Identified in a IGF2BP1-dependent mRNP granule complex containing untranslated mRNAs. Interacts with IGF2BP1. Interacts with C9orf72. Interacts with DGCR8. Interacts with TARDBP. Interacts with CKAP5. Interacts with PPIA/CYPA. Interacts (via C-terminus) with FAM76B; the interaction results in retention of HNRNPA2B1 in the nucleus and inhibition of the NF-kappa-B-mediated inflammatory pathway. Interacts with NF-kappa-B inhibitors NFKBIA and NFKBIE; the interaction may be mediated by the RRM2 domain of HNRNPA2B1, and HNRNPA2B1 may interact simultaneously with FAM76B and either NFKBIA or NFKBIE to form a complex. Sumoylated in exosomes, promoting miRNAs-binding. In terms of processing, asymmetric dimethylation at Arg-254 constitutes the major methylation site. According to a report, methylation affects subcellular location and promotes nuclear localization. According to another report, methylation at Arg-254 does not influence nucleocytoplasmic shuttling.

The protein localises to the nucleus. It localises to the nucleoplasm. The protein resides in the cytoplasmic granule. Its subcellular location is the secreted. It is found in the extracellular exosome. In terms of biological role, heterogeneous nuclear ribonucleoprotein (hnRNP) that associates with nascent pre-mRNAs, packaging them into hnRNP particles. The hnRNP particle arrangement on nascent hnRNA is non-random and sequence-dependent and serves to condense and stabilize the transcripts and minimize tangling and knotting. Packaging plays a role in various processes such as transcription, pre-mRNA processing, RNA nuclear export, subcellular location, mRNA translation and stability of mature mRNAs. Forms hnRNP particles with at least 20 other different hnRNP and heterogeneous nuclear RNA in the nucleus. Involved in transport of specific mRNAs to the cytoplasm in oligodendrocytes and neurons: acts by specifically recognizing and binding the A2RE (21 nucleotide hnRNP A2 response element) or the A2RE11 (derivative 11 nucleotide oligonucleotide) sequence motifs present on some mRNAs, and promotes their transport to the cytoplasm. Specifically binds single-stranded telomeric DNA sequences, protecting telomeric DNA repeat against endonuclease digestion. Also binds other RNA molecules, such as primary miRNA (pri-miRNAs): acts as a nuclear 'reader' of the N6-methyladenosine (m6A) mark by specifically recognizing and binding a subset of nuclear m6A-containing pri-miRNAs. Binding to m6A-containing pri-miRNAs promotes pri-miRNA processing by enhancing binding of DGCR8 to pri-miRNA transcripts. Involved in miRNA sorting into exosomes following sumoylation, possibly by binding (m6A)-containing pre-miRNAs. Acts as a regulator of efficiency of mRNA splicing, possibly by binding to m6A-containing pre-mRNAs. Plays a role in the splicing of pyruvate kinase PKM by binding repressively to sequences flanking PKM exon 9, inhibiting exon 9 inclusion and resulting in exon 10 inclusion and production of the PKM M2 isoform. The protein is Heterogeneous nuclear ribonucleoproteins A2/B1 (HNRNPA2B1) of Bos taurus (Bovine).